We begin with the raw amino-acid sequence, 207 residues long: Na(+)-translocating NADH-quinone reductase subunit D (207 aa).

The next 6 membrane-spanning stretches (helical) occupy residues 20 to 40 (IALQILGICSALAVTTQLQTA), 41 to 61 (FVMAIAVSLVTAFSSMFISMI), 69 to 89 (IRIIVQMAIIASLVILVDQIL), 102 to 122 (VFVGLIITNCIVMGRAEAFAM), 130 to 150 (FVDGIGNGLGYGAMLVIVAFL), and 177 to 197 (NGLFLLAPSAFFIIGFVIWAI).

Belongs to the NqrDE/RnfAE family. Composed of six subunits; NqrA, NqrB, NqrC, NqrD, NqrE and NqrF.

It is found in the cell inner membrane. It catalyses the reaction a ubiquinone + n Na(+)(in) + NADH + H(+) = a ubiquinol + n Na(+)(out) + NAD(+). NQR complex catalyzes the reduction of ubiquinone-1 to ubiquinol by two successive reactions, coupled with the transport of Na(+) ions from the cytoplasm to the periplasm. NqrA to NqrE are probably involved in the second step, the conversion of ubisemiquinone to ubiquinol. The sequence is that of Na(+)-translocating NADH-quinone reductase subunit D from Haemophilus ducreyi (strain 35000HP / ATCC 700724).